The sequence spans 1032 residues: uncharacterized protein (1032 aa).

The Cytoplasmic portion of the chain corresponds to 1–17 (MYEEIRMKFTDIFIRRP). A helical transmembrane segment spans residues 18 to 36 (VLAVSISLLMIILGLQAIS). The Periplasmic segment spans residues 37–337 (KLAVREYPKM…TIAINSSIHE (301 aa)). A helical transmembrane segment spans residues 338-357 (VIKTIGEATLIVLVVILMFI). Over 358 to 363 (GSFRAI) the chain is Cytoplasmic. The chain crosses the membrane as a helical span at residues 364–383 (LIPILAIPISLIGVLMLLQS). The Periplasmic portion of the chain corresponds to 384–389 (FNFSIN). The helical transmembrane segment at 390 to 411 (LMTLLALILAIGLVVDDAIVVL) threads the bilayer. Residues 412–438 (ENIDRHIKAGETPFRAAIIGTREIAVP) are Cytoplasmic-facing. A helical membrane pass occupies residues 439–457 (VISMTIALIAVYSPMALMG). At 458–470 (GITGTLFKEFALT) the chain is on the periplasmic side. A helical membrane pass occupies residues 471 to 493 (LAGAVFISGVVALTLSPMMSSKL). Topologically, residues 494 to 529 (LKSNAKPTWMEERVEHTLGKVNRVYEYMLDLVMLNR) are cytoplasmic. The chain crosses the membrane as a helical span at residues 530-548 (KSMLAFAVVIFSTLPFLFN). The Periplasmic portion of the chain corresponds to 549 to 852 (SLSSELTPNE…ARQLVQEGNA (304 aa)). A helical membrane pass occupies residues 853–872 (LAVTFALAVIIIFLVLAIQF). The Cytoplasmic segment spans residues 873-878 (ESIRDP). A helical transmembrane segment spans residues 879 to 898 (MVIMISVPLAVSGALVSLNI). The Periplasmic segment spans residues 899–910 (LSFFSIAGTTLN). A helical membrane pass occupies residues 911 to 932 (IYSQVGLITLVGLITKHGILMC). Over 933–960 (EVAKEEQLNHGKTRIEAITHAAKVRLRP) the chain is Cytoplasmic. A helical membrane pass occupies residues 961-979 (ILMTTAAMVAGLIPLLYAT). At 980–992 (GAGAVSRFSIGIV) the chain is on the periplasmic side. A helical transmembrane segment spans residues 993–1015 (IVAGLSIGTIFTLFVLPVVYSYV). At 1016–1032 (ATEHKPLPVFDENKTTH) the chain is on the cytoplasmic side.

It belongs to the resistance-nodulation-cell division (RND) (TC 2.A.6) family.

Its subcellular location is the cell inner membrane. Its function is as follows. Could be a drug efflux pump. This is an uncharacterized protein from Haemophilus influenzae (strain ATCC 51907 / DSM 11121 / KW20 / Rd).